Consider the following 410-residue polypeptide: MEGESTTAVLSGFVLGALAFQHLNTDSDTEGFLLGEVKGEAKNSITDSQMDDVEVIYTIDIQKYISCYQLFSFYNSSGEVNEQALKKILSNVKKDVVGWYKLRRHSDQIMTFRERLLHRNLQQHLSSQELVFLLLTPSIITESCSTHRLEHALYKPQKGLFHRIPLVVANLGMSEQLGYKTTSGSCTSAGFSRAVKTHSSEFFKEDGSLKEVQKINEMYTSLQDELKSICEKVEHSERAVEKLLNDVNRLKGEIKKRKQAQMQATREKNVQKDPQENILLCQALRTFFPDCELLHSCVISLKNRRISGSSCTTTHPLSGVDNLTLMVEYTDFPEASPARSALLVTKRKASDTDDGWQFKKSRLGGIQNRPSKTDTNSSNQEQASTVSSPETDEEIERMKGSGEYPQSPTF.

In terms of domain architecture, MPN spans 7–160 (TAVLSGFVLG…HALYKPQKGL (154 aa)). Phosphoserine is present on S48. Positions 208–261 (SLKEVQKINEMYTSLQDELKSICEKVEHSERAVEKLLNDVNRLKGEIKKRKQAQ) form a coiled coil. A disordered region spans residues 354 to 410 (DGWQFKKSRLGGIQNRPSKTDTNSSNQEQASTVSSPETDEEIERMKGSGEYPQSPTF). Polar residues predominate over residues 368–389 (NRPSKTDTNSSNQEQASTVSSP). S387 and S388 each carry phosphoserine. T391 is modified (phosphothreonine). Phosphoserine is present on S407. The pSXXF motif motif lies at 407–410 (SPTF).

Belongs to the FAM175 family. Abraxas subfamily. Component of the ARISC complex, at least composed of UIMC1/RAP80, ABRAXAS1, BRCC3/BRCC36, BABAM2 and BABAM1/NBA1. Component of the BRCA1-A complex, at least composed of the BRCA1, BARD1, UIMC1/RAP80, ABRAXAS1, BRCC3/BRCC36, BABAM2 and BABAM1/NBA1. In the complex, interacts directly with UIMC1/RAP80, BRCC3/BRCC36 and BABAM2. Homodimer. Interacts directly (when phosphorylated at Ser-407) with BRCA1. The phosphorylated homodimer can interact directly with two BRCA1 chains, giving rise to a heterotetramer. Binds polyubiquitin. Post-translationally, phosphorylation of Ser-407 of the pSXXF motif by ATM or ATR constitutes a specific recognition motif for the BRCT domain of BRCA1.

It localises to the nucleus. In terms of biological role, involved in DNA damage response and double-strand break (DSB) repair. Component of the BRCA1-A complex, acting as a central scaffold protein that assembles the various components of the complex and mediates the recruitment of BRCA1. The BRCA1-A complex specifically recognizes 'Lys-63'-linked ubiquitinated histones H2A and H2AX at DNA lesion sites, leading to target the BRCA1-BARD1 heterodimer to sites of DNA damage at DSBs. This complex also possesses deubiquitinase activity that specifically removes 'Lys-63'-linked ubiquitin on histones H2A and H2AX. The protein is BRCA1-A complex subunit Abraxas 1 of Bos taurus (Bovine).